The chain runs to 101 residues: Small ribosomal subunit protein uS14 (101 aa).

The span at 1–10 (MAKKSSIEKN) shows a compositional bias: basic and acidic residues. The disordered stretch occupies residues 1–23 (MAKKSSIEKNNRRKRMVKNAAPK).

Belongs to the universal ribosomal protein uS14 family. Part of the 30S ribosomal subunit. Contacts proteins S3 and S10.

Its function is as follows. Binds 16S rRNA, required for the assembly of 30S particles and may also be responsible for determining the conformation of the 16S rRNA at the A site. This chain is Small ribosomal subunit protein uS14, found in Bradyrhizobium diazoefficiens (strain JCM 10833 / BCRC 13528 / IAM 13628 / NBRC 14792 / USDA 110).